The primary structure comprises 132 residues: Ribosome-binding factor A (132 aa).

Belongs to the RbfA family. Monomer. Binds 30S ribosomal subunits, but not 50S ribosomal subunits or 70S ribosomes.

It is found in the cytoplasm. One of several proteins that assist in the late maturation steps of the functional core of the 30S ribosomal subunit. Associates with free 30S ribosomal subunits (but not with 30S subunits that are part of 70S ribosomes or polysomes). Required for efficient processing of 16S rRNA. May interact with the 5'-terminal helix region of 16S rRNA. This chain is Ribosome-binding factor A, found in Bordetella avium (strain 197N).